The following is a 448-amino-acid chain: UDP-N-acetylmuramoylalanine--D-glutamate ligase (448 aa).

An ATP-binding site is contributed by 116-122; that stretch reads GSNAKST.

This sequence belongs to the MurCDEF family.

The protein localises to the cytoplasm. The enzyme catalyses UDP-N-acetyl-alpha-D-muramoyl-L-alanine + D-glutamate + ATP = UDP-N-acetyl-alpha-D-muramoyl-L-alanyl-D-glutamate + ADP + phosphate + H(+). The protein operates within cell wall biogenesis; peptidoglycan biosynthesis. In terms of biological role, cell wall formation. Catalyzes the addition of glutamate to the nucleotide precursor UDP-N-acetylmuramoyl-L-alanine (UMA). This is UDP-N-acetylmuramoylalanine--D-glutamate ligase from Pseudomonas savastanoi pv. phaseolicola (strain 1448A / Race 6) (Pseudomonas syringae pv. phaseolicola (strain 1448A / Race 6)).